The sequence spans 165 residues: HTH-type transcriptional regulator MmpR5 (165 aa).

The HTH marR-type domain occupies Met1 to Ser151. Positions Ser53–Gln76 form a DNA-binding region, H-T-H motif.

Homodimer.

In terms of biological role, controls the expression level of the Mmps2-MmpL2, MmpS4-MmpL4, and MmpS5-MmpL5 transport systems. Also controls its own expression. Acts by binding directly to the promoter regions. This is HTH-type transcriptional regulator MmpR5 from Mycobacterium tuberculosis (strain ATCC 25618 / H37Rv).